The primary structure comprises 590 residues: 4-oxocyclohex-2-ene-1-carboxylate 5-dehydrogenase (590 aa).

This sequence belongs to the FAD-dependent oxidoreductase 2 family. As to quaternary structure, forms multimers. It depends on FAD as a cofactor.

It catalyses the reaction 4-oxocyclohex-2-ene-1-carboxylate + NAD(+) = 4-oxocyclohexa-2,5-diene-1-carboxylate + NADH + H(+). Desaturase involved in a cyclohexanecarboxylate (CHCA) degradation pathway. Probably catalyzes the conversion of 4-oxocyclohexenecarboxylate to 4-oxocyclohex-2,5-dienecarboxylate, which is spontaneously isomerized to 4-hydroxybenzoate (4-HBA). The sequence is that of 4-oxocyclohex-2-ene-1-carboxylate 5-dehydrogenase from Sinomonas cyclohexanicum (Corynebacterium cyclohexanicum).